Reading from the N-terminus, the 202-residue chain is Ribosome maturation factor RimM (202 aa).

The region spanning 121–202 is the PRC barrel domain; the sequence is KDEYYWVDLI…CITVDWQPDY (82 aa).

This sequence belongs to the RimM family. As to quaternary structure, binds ribosomal protein uS19.

The protein localises to the cytoplasm. In terms of biological role, an accessory protein needed during the final step in the assembly of 30S ribosomal subunit, possibly for assembly of the head region. Essential for efficient processing of 16S rRNA. May be needed both before and after RbfA during the maturation of 16S rRNA. It has affinity for free ribosomal 30S subunits but not for 70S ribosomes. This is Ribosome maturation factor RimM from Polaromonas sp. (strain JS666 / ATCC BAA-500).